We begin with the raw amino-acid sequence, 424 residues long: Tyrosine--tRNA ligase (424 aa).

Y37 is an L-tyrosine binding site. A 'HIGH' region motif is present at residues 42-51; the sequence is PTADSLHLGH. The L-tyrosine site is built by Y175 and Q179. The short motif at 235 to 239 is the 'KMSKS' region element; it reads KFGKT. K238 serves as a coordination point for ATP. Residues 357–414 form the S4 RNA-binding domain; it reads ADLQQALVNAELVPSRGQARTMIGSNAVAINGEKQADPEYVFTDADRLFGRYTLLRRG.

The protein belongs to the class-I aminoacyl-tRNA synthetase family. TyrS type 1 subfamily. In terms of assembly, homodimer.

It localises to the cytoplasm. It catalyses the reaction tRNA(Tyr) + L-tyrosine + ATP = L-tyrosyl-tRNA(Tyr) + AMP + diphosphate + H(+). In terms of biological role, catalyzes the attachment of tyrosine to tRNA(Tyr) in a two-step reaction: tyrosine is first activated by ATP to form Tyr-AMP and then transferred to the acceptor end of tRNA(Tyr). The sequence is that of Tyrosine--tRNA ligase from Yersinia pseudotuberculosis serotype O:1b (strain IP 31758).